The following is a 616-amino-acid chain: Proline--tRNA ligase (616 aa).

The protein belongs to the class-II aminoacyl-tRNA synthetase family. ProS type 1 subfamily. Homodimer.

The protein localises to the cytoplasm. The catalysed reaction is tRNA(Pro) + L-proline + ATP = L-prolyl-tRNA(Pro) + AMP + diphosphate. Its function is as follows. Catalyzes the attachment of proline to tRNA(Pro) in a two-step reaction: proline is first activated by ATP to form Pro-AMP and then transferred to the acceptor end of tRNA(Pro). As ProRS can inadvertently accommodate and process non-cognate amino acids such as alanine and cysteine, to avoid such errors it has two additional distinct editing activities against alanine. One activity is designated as 'pretransfer' editing and involves the tRNA(Pro)-independent hydrolysis of activated Ala-AMP. The other activity is designated 'posttransfer' editing and involves deacylation of mischarged Ala-tRNA(Pro). The misacylated Cys-tRNA(Pro) is not edited by ProRS. This chain is Proline--tRNA ligase, found in Streptococcus mutans serotype c (strain ATCC 700610 / UA159).